We begin with the raw amino-acid sequence, 20 residues long: Unknown protein NF007 from 2D-PAGE (20 aa).

This chain is Unknown protein NF007 from 2D-PAGE, found in Naegleria fowleri (Brain eating amoeba).